Here is a 411-residue protein sequence, read N- to C-terminus: Actin-like protein 9 (411 aa).

Basic and acidic residues predominate over residues 1-15 (MDVNGPKRWEPHRSL). The tract at residues 1-23 (MDVNGPKRWEPHRSLDLNPRSTP) is disordered.

It belongs to the actin family. In terms of assembly, interacts with ACTL7A.

It localises to the cytoplasmic vesicle. It is found in the secretory vesicle. The protein resides in the acrosome. Its subcellular location is the cytoplasm. The protein localises to the cytoskeleton. It localises to the perinuclear theca. Functionally, testis-specic protein that plays an important role in fusion of proacrosomal vesicles and perinuclear theca formation. This chain is Actin-like protein 9 (Actl9), found in Rattus norvegicus (Rat).